The sequence spans 302 residues: 4-diphosphocytidyl-2-C-methyl-D-erythritol kinase (302 aa).

The active site involves lysine 13. 101–111 (PVASGIGGGSS) contacts ATP. The active site involves aspartate 143.

The protein belongs to the GHMP kinase family. IspE subfamily.

It carries out the reaction 4-CDP-2-C-methyl-D-erythritol + ATP = 4-CDP-2-C-methyl-D-erythritol 2-phosphate + ADP + H(+). The protein operates within isoprenoid biosynthesis; isopentenyl diphosphate biosynthesis via DXP pathway; isopentenyl diphosphate from 1-deoxy-D-xylulose 5-phosphate: step 3/6. In terms of biological role, catalyzes the phosphorylation of the position 2 hydroxy group of 4-diphosphocytidyl-2C-methyl-D-erythritol. The chain is 4-diphosphocytidyl-2-C-methyl-D-erythritol kinase from Granulibacter bethesdensis (strain ATCC BAA-1260 / CGDNIH1).